A 176-amino-acid chain; its full sequence is Ribosome maturation factor RimM (176 aa).

Positions 97-176 (EDEFYWRDLI…QILVDWDPDF (80 aa)) constitute a PRC barrel domain.

It belongs to the RimM family. In terms of assembly, binds ribosomal protein uS19.

The protein resides in the cytoplasm. Its function is as follows. An accessory protein needed during the final step in the assembly of 30S ribosomal subunit, possibly for assembly of the head region. Essential for efficient processing of 16S rRNA. May be needed both before and after RbfA during the maturation of 16S rRNA. It has affinity for free ribosomal 30S subunits but not for 70S ribosomes. In Shewanella sp. (strain ANA-3), this protein is Ribosome maturation factor RimM.